Reading from the N-terminus, the 250-residue chain is Transmembrane protein 106C (250 aa).

Residues 1–25 (MGSQHSAAARPSSCRRKQEDDRDGL) are disordered. Residue Gly-2 is the site of N-myristoyl glycine attachment. Residues 16-25 (RKQEDDRDGL) are compositionally biased toward basic and acidic residues. The helical transmembrane segment at 87–107 (YVLLSILLCLLASGLVVFFLF) threads the bilayer. N-linked (GlcNAc...) asparagine glycans are attached at residues Asn-173 and Asn-186. Residues 197–217 (FSYVYFFCTVPEILVHNIVIF) traverse the membrane as a helical segment.

This sequence belongs to the TMEM106 family. In terms of assembly, interacts with TMEM106B.

It localises to the endoplasmic reticulum membrane. It is found in the membrane. The chain is Transmembrane protein 106C (TMEM106C) from Homo sapiens (Human).